Consider the following 397-residue polypeptide: Acetate kinase 1 (397 aa).

Asn8 lines the Mg(2+) pocket. ATP is bound at residue Lys15. Arg89 is a substrate binding site. Asp146 serves as the catalytic Proton donor/acceptor. Residues 206–210, 281–283, and 329–333 contribute to the ATP site; these read HLGNG, DFR, and GVGEN. Position 380 (Glu380) interacts with Mg(2+).

It belongs to the acetokinase family. As to quaternary structure, homodimer. Mg(2+) serves as cofactor. The cofactor is Mn(2+).

Its subcellular location is the cytoplasm. The enzyme catalyses acetate + ATP = acetyl phosphate + ADP. The protein operates within metabolic intermediate biosynthesis; acetyl-CoA biosynthesis; acetyl-CoA from acetate: step 1/2. Catalyzes the formation of acetyl phosphate from acetate and ATP. Can also catalyze the reverse reaction. The polypeptide is Acetate kinase 1 (Listeria monocytogenes serotype 4b (strain F2365)).